Consider the following 312-residue polypeptide: Gamma-soluble NSF attachment protein (312 aa).

The tract at residues 281–312 (KKKSPATPQAKPDGVTATAADEEEDEYSGGLC) is disordered. A Phosphoserine modification is found at Ser284. Thr287 carries the phosphothreonine modification. Positions 300-312 (ADEEEDEYSGGLC) are enriched in acidic residues. Ser308 bears the Phosphoserine mark.

The protein belongs to the SNAP family. In terms of assembly, interacts with RAB11FIP5. Interacts with VTI1A.

Its subcellular location is the membrane. It is found in the golgi apparatus. Functionally, required for vesicular transport between the endoplasmic reticulum and the Golgi apparatus. The sequence is that of Gamma-soluble NSF attachment protein from Homo sapiens (Human).